The following is a 635-amino-acid chain: Cationic amino acid transporter 4 (635 aa).

3 consecutive transmembrane segments (helical) span residues 42–62 (LTLLGVGGMVGSGLYVLTGTV), 66–86 (MAGPAVLLSFLVAAVASLLAA), and 113–133 (IWAFLIGWNVLLEYLIGGAAV). N-linked (GlcNAc...) asparagine glycans are attached at residues Asn146, Asn151, and Asn195. A helical transmembrane segment spans residues 197–217 (TFSAISLIVILFIIVLGFILA). Asn221 carries N-linked (GlcNAc...) asparagine glycosylation. 5 helical membrane passes run 229 to 249 (FAPFGFSGILAGTATCFYAFV), 270 to 290 (MAIAISLSLAAGAYILVSTVL), 318 to 338 (GFIVAVGSICAMNTVLLSNLF), 365 to 385 (QVPVVGILVFGVLMALLALLL), and 391 to 411 (VQFLSIGTLLAYTFVATSIIV). 2 positions are modified to phosphoserine: Ser422 and Ser427. 4 consecutive transmembrane segments (helical) span residues 478-498 (VAWALGILVASAISLACVLVF), 508-528 (WGYVLLLVISGAVFLSSLLVL), 539-559 (TFQIPLVPLTPALSILLNTCL), and 567-587 (TWLRFIFWLLVGLVVYFGYGI).

The protein belongs to the amino acid-polyamine-organocation (APC) superfamily. Cationic amino acid transporter (CAT) (TC 2.A.3.3) family.

The protein resides in the membrane. In terms of biological role, involved in the transport of the cationic amino acids (arginine, lysine and ornithine). The sequence is that of Cationic amino acid transporter 4 (Slc7a4) from Mus musculus (Mouse).